A 309-amino-acid chain; its full sequence is Chitin synthase export chaperone (309 aa).

7 consecutive transmembrane segments (helical) span residues 51 to 71, 86 to 106, 114 to 134, 156 to 176, 194 to 214, 218 to 238, and 251 to 271; these read FQIGNAFVHFGGLIILLIIIF, LFFFYLIICLIVSSLVVDCGV, YAYFVAVQLGLASASCICILY, VICFCWFVVNFIVALVTFKSW, LINAIILAFYVISQIVLVVFA, YWPLGAILLGVFFFVAGQVLT, and HYIDGLFFGSACNIFTVMMIY.

It belongs to the CHS7 family. Interacts with CHS3.

It localises to the endoplasmic reticulum membrane. Its function is as follows. Chaperone required for the export of the chitin synthase CHS3 from the endoplasmic reticulum. The polypeptide is Chitin synthase export chaperone (CHS7) (Debaryomyces hansenii (strain ATCC 36239 / CBS 767 / BCRC 21394 / JCM 1990 / NBRC 0083 / IGC 2968) (Yeast)).